The primary structure comprises 229 residues: Ribose-5-phosphate isomerase A (229 aa).

Substrate is bound by residues threonine 28 to threonine 31, aspartate 85 to aspartate 88, and lysine 98 to glycine 101. The Proton acceptor role is filled by glutamate 107. Lysine 125 contributes to the substrate binding site.

This sequence belongs to the ribose 5-phosphate isomerase family. In terms of assembly, homotetramer.

It catalyses the reaction aldehydo-D-ribose 5-phosphate = D-ribulose 5-phosphate. Its pathway is carbohydrate degradation; pentose phosphate pathway; D-ribose 5-phosphate from D-ribulose 5-phosphate (non-oxidative stage): step 1/1. Its activity is regulated as follows. Inhibited by D-4-phosphoerythronic acid. Involved in the first step of the non-oxidative branch of the pentose phosphate pathway. It catalyzes the reversible conversion of ribose-5-phosphate to ribulose 5-phosphate. The polypeptide is Ribose-5-phosphate isomerase A (Pyrococcus horikoshii (strain ATCC 700860 / DSM 12428 / JCM 9974 / NBRC 100139 / OT-3)).